A 240-amino-acid chain; its full sequence is Aquaporin Z (240 aa).

Helical transmembrane passes span Ala-10–Phe-30 and Ile-35–Ile-55. The NPA 1 motif lies at Asn-64–Ala-66. The next 3 helical transmembrane spans lie at Ile-82–Ile-102, Met-131–Gly-151, and Gly-160–Val-180. The NPA 2 signature appears at Asn-186–Ala-188. Residues Ala-194–Ile-214 form a helical membrane-spanning segment.

It belongs to the MIP/aquaporin (TC 1.A.8) family. Homotetramer.

Its subcellular location is the cell inner membrane. It carries out the reaction H2O(in) = H2O(out). In terms of biological role, channel that permits osmotically driven movement of water in both directions. It is involved in the osmoregulation and in the maintenance of cell turgor during volume expansion in rapidly growing cells. It mediates rapid entry or exit of water in response to abrupt changes in osmolarity. The chain is Aquaporin Z from Bradyrhizobium diazoefficiens (strain JCM 10833 / BCRC 13528 / IAM 13628 / NBRC 14792 / USDA 110).